Consider the following 243-residue polypeptide: Carboxy-S-adenosyl-L-methionine synthase (243 aa).

S-adenosyl-L-methionine contacts are provided by residues Tyr-40, 65-67 (GCS), 90-91 (DN), 118-119 (DI), Asn-133, and Arg-200.

It belongs to the class I-like SAM-binding methyltransferase superfamily. Cx-SAM synthase family. Homodimer.

It catalyses the reaction prephenate + S-adenosyl-L-methionine = carboxy-S-adenosyl-L-methionine + 3-phenylpyruvate + H2O. Catalyzes the conversion of S-adenosyl-L-methionine (SAM) to carboxy-S-adenosyl-L-methionine (Cx-SAM). This chain is Carboxy-S-adenosyl-L-methionine synthase, found in Shewanella amazonensis (strain ATCC BAA-1098 / SB2B).